A 191-amino-acid chain; its full sequence is dTTP/UTP pyrophosphatase (191 aa).

Asp-70 acts as the Proton acceptor in catalysis.

The protein belongs to the Maf family. YhdE subfamily. The cofactor is a divalent metal cation.

It localises to the cytoplasm. It catalyses the reaction dTTP + H2O = dTMP + diphosphate + H(+). The enzyme catalyses UTP + H2O = UMP + diphosphate + H(+). In terms of biological role, nucleoside triphosphate pyrophosphatase that hydrolyzes dTTP and UTP. May have a dual role in cell division arrest and in preventing the incorporation of modified nucleotides into cellular nucleic acids. The polypeptide is dTTP/UTP pyrophosphatase (Clostridium novyi (strain NT)).